A 342-amino-acid polypeptide reads, in one-letter code: Arrestin domain-containing protein 5 (342 aa).

Belongs to the arrestin family. Testis-enriched.

It localises to the membrane. In terms of biological role, plays an essential role in spermatogenesis. May be involved in the anchoring of the sperm head to the tail during spermatogenesis by affecting SEC22A-mediated SUN5 and NDC1 transport and localization. The chain is Arrestin domain-containing protein 5 (ARRDC5) from Homo sapiens (Human).